We begin with the raw amino-acid sequence, 149 residues long: MSGASARDATLLAFDYGEKRIGVAIGNALTRSARALVVIQNLNREHRFKAVGDLLAEWRPDALVVGLPMHPDGTPHDMTQQAKRFGNQLNGRFGLPVTWVDERYSSVEAEAGLRERNVRGRARTDMLDAEAARVILQQYLDQLSDHEHH.

It belongs to the YqgF nuclease family.

Its subcellular location is the cytoplasm. Could be a nuclease involved in processing of the 5'-end of pre-16S rRNA. The protein is Putative pre-16S rRNA nuclease of Burkholderia orbicola (strain MC0-3).